The following is a 434-amino-acid chain: Trigger factor (434 aa).

The region spanning 161–246 (EDRATLDFTG…LKKVEVRELP (86 aa)) is the PPIase FKBP-type domain.

Belongs to the FKBP-type PPIase family. Tig subfamily.

The protein localises to the cytoplasm. The enzyme catalyses [protein]-peptidylproline (omega=180) = [protein]-peptidylproline (omega=0). Involved in protein export. Acts as a chaperone by maintaining the newly synthesized protein in an open conformation. Functions as a peptidyl-prolyl cis-trans isomerase. This chain is Trigger factor, found in Yersinia enterocolitica serotype O:8 / biotype 1B (strain NCTC 13174 / 8081).